The following is a 100-amino-acid chain: Large ribosomal subunit protein uL23 (100 aa).

The protein belongs to the universal ribosomal protein uL23 family. Part of the 50S ribosomal subunit. Contacts protein L29, and trigger factor when it is bound to the ribosome.

In terms of biological role, one of the early assembly proteins it binds 23S rRNA. One of the proteins that surrounds the polypeptide exit tunnel on the outside of the ribosome. Forms the main docking site for trigger factor binding to the ribosome. This chain is Large ribosomal subunit protein uL23, found in Mycolicibacterium paratuberculosis (strain ATCC BAA-968 / K-10) (Mycobacterium paratuberculosis).